A 63-amino-acid polypeptide reads, in one-letter code: Metallothionein-2 (63 aa).

It belongs to the metallothionein superfamily. Type 6 family.

This protein binds cations of several transition elements. The sequence is that of Metallothionein-2 (mtl-2) from Caenorhabditis elegans.